Consider the following 229-residue polypeptide: Large ribosomal subunit protein uL1 (229 aa).

Belongs to the universal ribosomal protein uL1 family. In terms of assembly, part of the 50S ribosomal subunit.

Its function is as follows. Binds directly to 23S rRNA. The L1 stalk is quite mobile in the ribosome, and is involved in E site tRNA release. In terms of biological role, protein L1 is also a translational repressor protein, it controls the translation of the L11 operon by binding to its mRNA. The polypeptide is Large ribosomal subunit protein uL1 (Streptococcus gordonii (strain Challis / ATCC 35105 / BCRC 15272 / CH1 / DL1 / V288)).